Reading from the N-terminus, the 150-residue chain is UPF0540 protein At1g62080 (150 aa).

Positions 1 to 21 are cleaved as a signal peptide; the sequence is MNATKFLVLLVIGVLCAIVTA. Positions 119-135 are enriched in low complexity; the sequence is AAAARAKGKVASASRVK. The interval 119-150 is disordered; the sequence is AAAARAKGKVASASRVKGSSEKKKKDRKGKKD.

It belongs to the UPF0540 family.

The chain is UPF0540 protein At1g62080 from Arabidopsis thaliana (Mouse-ear cress).